A 795-amino-acid chain; its full sequence is ATP-dependent RNA helicase DHX15 (795 aa).

The disordered stretch occupies residues 1–108; the sequence is MSKRHRLDLG…HSTHAGHAGH (108 aa). Ser-15 carries the phosphoserine modification. The segment covering 20 to 62 has biased composition (basic and acidic residues); sequence AGTDGKDRDRDRDREDRSKDRDRERDRGDREREREKEKEKELR. The span at 79–108 shows a compositional bias: low complexity; the sequence is ASHSAHSTHSAHSTHSTHSAHSTHAGHAGH. In terms of domain architecture, Helicase ATP-binding spans 147–313; sequence TDILVRHQSF…FDNCPLLTIP (167 aa). 160 to 167 serves as a coordination point for ATP; it reads GETGSGKT. A DEAH box motif is present at residues 260–263; it reads DEAH. Residues 338-518 enclose the Helicase C-terminal domain; sequence TVIQIHMCEE…SVVLQLKKLG (181 aa). Position 488 is an N6-acetyllysine (Lys-488). Lys-786 is covalently cross-linked (Glycyl lysine isopeptide (Lys-Gly) (interchain with G-Cter in SUMO2)).

The protein belongs to the DEAD box helicase family. DEAH subfamily. DDX15/PRP43 sub-subfamily. Component of the U11/U12 snRNPs that are part of the U12-type spliceosome. Identified in the Intron Large spliceosome complex (IL, also named intron lariat spliceosome), a post-mRNA release spliceosomal complex containing the excised intron, U2, U5 and U6 snRNPs, and splicing factors; the association may be transient. The IL complex exists in two distinct conformations, one with the DHX15 (ILS2) and one without (ILS1). Interacts with TFIP11 (via G-patch domain); indicative for a recruitment to the IL complex. Interacts with SSB/La. Interacts with GPATCH2 (via G-patch domain); promoting the RNA helicase activity. Interacts with NKRF (via G-patch domain); promoting the RNA helicase activity. Interacts with NLRP6. As to expression, ubiquitous.

The protein resides in the nucleus. The protein localises to the nucleolus. The catalysed reaction is ATP + H2O = ADP + phosphate + H(+). ATPase activity is enhanced upon binding to G-patch domain-containing proteins. G-patch domain-containing proteins act like a brace that tethers mobile sections of DHX15 together, stabilizing a functional conformation with high RNA affinity, thereby promoting the ATPase activity. Functionally, RNA helicase involved in mRNA processing and antiviral innate immunity. Pre-mRNA processing factor involved in disassembly of spliceosomes after the release of mature mRNA. In cooperation with TFIP11 seem to be involved in the transition of the U2, U5 and U6 snRNP-containing IL complex to the snRNP-free IS complex leading to efficient debranching and turnover of excised introns. Plays a key role in antiviral innate immunity by promoting both MAVS-dependent signaling and NLRP6 inflammasome. Acts as an RNA virus sensor: recognizes and binds viral double stranded RNA (dsRNA) and activates the MAVS-dependent signaling to produce interferon-beta and interferon lambda-3 (IFNL3). Involved in intestinal antiviral innate immunity together with NLRP6: recognizes and binds viral dsRNA and promotes activation of the NLRP6 inflammasome in intestinal epithelial cells to restrict infection by enteric viruses. The NLRP6 inflammasome acts by promoting maturation and secretion of IL18 in the extracellular milieu. Also involved in antibacterial innate immunity by promoting Wnt-induced antimicrobial protein expression in Paneth cells. The chain is ATP-dependent RNA helicase DHX15 from Homo sapiens (Human).